Reading from the N-terminus, the 297-residue chain is Ribosomal RNA small subunit methyltransferase A (297 aa).

Positions 31, 33, 58, 79, 104, and 129 each coordinate S-adenosyl-L-methionine.

It belongs to the class I-like SAM-binding methyltransferase superfamily. rRNA adenine N(6)-methyltransferase family. RsmA subfamily.

The protein localises to the cytoplasm. The enzyme catalyses adenosine(1518)/adenosine(1519) in 16S rRNA + 4 S-adenosyl-L-methionine = N(6)-dimethyladenosine(1518)/N(6)-dimethyladenosine(1519) in 16S rRNA + 4 S-adenosyl-L-homocysteine + 4 H(+). Its function is as follows. Specifically dimethylates two adjacent adenosines (A1518 and A1519) in the loop of a conserved hairpin near the 3'-end of 16S rRNA in the 30S particle. May play a critical role in biogenesis of 30S subunits. The sequence is that of Ribosomal RNA small subunit methyltransferase A from Staphylococcus aureus (strain Newman).